Reading from the N-terminus, the 642-residue chain is Zinc finger protein 14 (642 aa).

Residues 4 to 76 (VSFEDVAVNF…MVERLCESRK (73 aa)) enclose the KRAB domain. The C2H2-type 1 zinc-finger motif lies at 103–125 (HECSFCGRDFMHHSSLNRHMRSH). The segment at 141–163 (RKHKAVEKTFSYHHCFRKHERTH) adopts a C2H2-type 2; degenerate zinc-finger fold. The segment at 169–191 (YECKQCGKAFIYYQPFQRHERTH) adopts a C2H2-type 3 zinc-finger fold. The C2H2-type 4; atypical zinc-finger motif lies at 197–217 (YECKQCGKTFIYYQSFQQHAH). 15 C2H2-type zinc fingers span residues 223–245 (YECK…ERTH), 251–273 (YECK…ERTH), 279–301 (YKCK…KRTH), 307–329 (YECK…VITH), 335–357 (YKCK…ERTH), 363–385 (YECK…ERTH), 391–413 (YECK…ETTH), 419–441 (YECK…ERTH), 447–469 (YECK…ERSH), 475–497 (YECK…ERTH), 503–525 (YECK…EKIH), 531–553 (FECK…ERTH), 559–581 (YQCK…ERTH), 587–609 (YRCK…ERSH), and 615–637 (YECK…ERTH).

It belongs to the krueppel C2H2-type zinc-finger protein family.

The protein localises to the nucleus. Functionally, may be involved in transcriptional regulation. In Pongo abelii (Sumatran orangutan), this protein is Zinc finger protein 14 (ZNF14).